A 405-amino-acid polypeptide reads, in one-letter code: Acetate kinase (405 aa).

Asn-7 lines the Mg(2+) pocket. Lys-14 provides a ligand contact to ATP. Residue Arg-99 coordinates substrate. Catalysis depends on Asp-156, which acts as the Proton donor/acceptor. His-215–Gly-219 is a binding site for ATP. Position 391 (Glu-391) interacts with Mg(2+).

Belongs to the acetokinase family. Homodimer. It depends on Mg(2+) as a cofactor. Mn(2+) is required as a cofactor.

The protein resides in the cytoplasm. The catalysed reaction is acetate + ATP = acetyl phosphate + ADP. It participates in metabolic intermediate biosynthesis; acetyl-CoA biosynthesis; acetyl-CoA from acetate: step 1/2. In terms of biological role, catalyzes the formation of acetyl phosphate from acetate and ATP. Can also catalyze the reverse reaction. The protein is Acetate kinase of Trichormus variabilis (strain ATCC 29413 / PCC 7937) (Anabaena variabilis).